The following is a 256-amino-acid chain: Pimeloyl-[acyl-carrier protein] methyl ester esterase (256 aa).

An AB hydrolase-1 domain is found at 15 to 242; that stretch reads HLVLLHGWGL…AAHAPFISHP (228 aa). Substrate is bound by residues Trp22, 82 to 83, and 143 to 147; these read SL and FLALQ. Ser82 acts as the Nucleophile in catalysis. Residues Asp207 and His235 contribute to the active site. A substrate-binding site is contributed by His235.

The protein belongs to the AB hydrolase superfamily. Carboxylesterase BioH family. Monomer.

It localises to the cytoplasm. It carries out the reaction 6-carboxyhexanoyl-[ACP] methyl ester + H2O = 6-carboxyhexanoyl-[ACP] + methanol + H(+). It functions in the pathway cofactor biosynthesis; biotin biosynthesis. Functionally, the physiological role of BioH is to remove the methyl group introduced by BioC when the pimeloyl moiety is complete. It allows to synthesize pimeloyl-ACP via the fatty acid synthetic pathway through the hydrolysis of the ester bonds of pimeloyl-ACP esters. The protein is Pimeloyl-[acyl-carrier protein] methyl ester esterase of Escherichia coli (strain SMS-3-5 / SECEC).